Here is a 179-residue protein sequence, read N- to C-terminus: Large ribosomal subunit protein uL5 (179 aa).

It belongs to the universal ribosomal protein uL5 family. As to quaternary structure, part of the 50S ribosomal subunit; part of the 5S rRNA/L5/L18/L25 subcomplex. Contacts the 5S rRNA and the P site tRNA. Forms a bridge to the 30S subunit in the 70S ribosome.

Its function is as follows. This is one of the proteins that bind and probably mediate the attachment of the 5S RNA into the large ribosomal subunit, where it forms part of the central protuberance. In the 70S ribosome it contacts protein S13 of the 30S subunit (bridge B1b), connecting the 2 subunits; this bridge is implicated in subunit movement. Contacts the P site tRNA; the 5S rRNA and some of its associated proteins might help stabilize positioning of ribosome-bound tRNAs. This is Large ribosomal subunit protein uL5 from Buchnera aphidicola subsp. Baizongia pistaciae (strain Bp).